Reading from the N-terminus, the 399-residue chain is Succinate--CoA ligase [ADP-forming] subunit beta (399 aa).

An ATP-grasp domain is found at lysine 9–glutamate 254. ATP contacts are provided by residues lysine 46, glycine 53 to glycine 55, glutamate 109, alanine 112, and glutamate 117. Mg(2+)-binding residues include asparagine 209 and aspartate 223. Substrate contacts are provided by residues asparagine 274 and glycine 331–methionine 333.

This sequence belongs to the succinate/malate CoA ligase beta subunit family. As to quaternary structure, heterotetramer of two alpha and two beta subunits. Requires Mg(2+) as cofactor.

The catalysed reaction is succinate + ATP + CoA = succinyl-CoA + ADP + phosphate. It catalyses the reaction GTP + succinate + CoA = succinyl-CoA + GDP + phosphate. It functions in the pathway carbohydrate metabolism; tricarboxylic acid cycle; succinate from succinyl-CoA (ligase route): step 1/1. In terms of biological role, succinyl-CoA synthetase functions in the citric acid cycle (TCA), coupling the hydrolysis of succinyl-CoA to the synthesis of either ATP or GTP and thus represents the only step of substrate-level phosphorylation in the TCA. The beta subunit provides nucleotide specificity of the enzyme and binds the substrate succinate, while the binding sites for coenzyme A and phosphate are found in the alpha subunit. This Maricaulis maris (strain MCS10) (Caulobacter maris) protein is Succinate--CoA ligase [ADP-forming] subunit beta.